A 299-amino-acid polypeptide reads, in one-letter code: Lysine exporter LysO (299 aa).

The next 8 helical transmembrane spans lie at 1–21 (MFSG…IPLR), 31–51 (QLLS…LAFL), 58–78 (LLAI…CNIA), 109–129 (LKLC…LAFL), 131–151 (HATE…GIQL), 169–189 (IVAV…AFIL), 207–227 (SLSG…AAFF), and 277–297 (PAAI…IAFF).

This sequence belongs to the LysO family.

The protein resides in the cell inner membrane. Functionally, mediates export of lysine. This Escherichia coli (strain K12) protein is Lysine exporter LysO.